Consider the following 279-residue polypeptide: Sarcosine/dimethylglycine N-methyltransferase (279 aa).

The protein belongs to the methyltransferase superfamily. Monomer.

It carries out the reaction sarcosine + 2 S-adenosyl-L-methionine = glycine betaine + 2 S-adenosyl-L-homocysteine + 2 H(+). It catalyses the reaction sarcosine + S-adenosyl-L-methionine = N,N-dimethylglycine + S-adenosyl-L-homocysteine + H(+). The enzyme catalyses N,N-dimethylglycine + S-adenosyl-L-methionine = glycine betaine + S-adenosyl-L-homocysteine + H(+). It functions in the pathway amine and polyamine biosynthesis; betaine biosynthesis via glycine pathway; betaine from glycine: step 2/3. It participates in amine and polyamine biosynthesis; betaine biosynthesis via glycine pathway; betaine from glycine: step 3/3. P-chloromercuribenzoate acid inhibits 23% of the SDMT activities on sarcosine and dimethylglycine, and S-adenosylhomocysteine (AdoHcy) inhibits completely GSMT activities. Catalyzes the methylation of sarcosine and dimethylglycine to dimethylglycine and betaine, respectively, with S-adenosylmethionine (AdoMet) acting as the methyl donor. It has strict specificity for sarcosine and dimethylglycine as the methyl group acceptors. This Halorhodospira halochloris (Ectothiorhodospira halochloris) protein is Sarcosine/dimethylglycine N-methyltransferase.